The primary structure comprises 312 residues: Zinc transporter ZitB (312 aa).

6 consecutive transmembrane segments (helical) span residues 16 to 36 (LLIA…GGWL), 40 to 60 (LALL…FIAL), 81 to 101 (LTTL…ILIV), 117 to 137 (TPML…FWIL), 153 to 173 (LHVL…IVIL), and 177 to 197 (WTPI…RSAW).

Belongs to the cation diffusion facilitator (CDF) transporter (TC 2.A.4) family. SLC30A subfamily.

It is found in the cell inner membrane. Functionally, involved in zinc efflux across the cytoplasmic membrane, thus reducing zinc accumulation in the cytoplasm and rendering bacteria more resistant to zinc. It may contribute to zinc homeostasis at low concentrations of zinc. This Yersinia pestis protein is Zinc transporter ZitB.